A 335-amino-acid chain; its full sequence is Biotin synthase (335 aa).

Residues 46 to 274 (YDIQLASLFS…ESKIRLSAGR (229 aa)) form the Radical SAM core domain. [4Fe-4S] cluster is bound by residues C61, C65, and C68. Residues C105, C137, C197, and R269 each contribute to the [2Fe-2S] cluster site.

Belongs to the radical SAM superfamily. Biotin synthase family. As to quaternary structure, homodimer. It depends on [4Fe-4S] cluster as a cofactor. The cofactor is [2Fe-2S] cluster.

It carries out the reaction (4R,5S)-dethiobiotin + (sulfur carrier)-SH + 2 reduced [2Fe-2S]-[ferredoxin] + 2 S-adenosyl-L-methionine = (sulfur carrier)-H + biotin + 2 5'-deoxyadenosine + 2 L-methionine + 2 oxidized [2Fe-2S]-[ferredoxin]. It functions in the pathway cofactor biosynthesis; biotin biosynthesis; biotin from 7,8-diaminononanoate: step 2/2. Catalyzes the conversion of dethiobiotin (DTB) to biotin by the insertion of a sulfur atom into dethiobiotin via a radical-based mechanism. In Prochlorococcus marinus (strain MIT 9301), this protein is Biotin synthase.